The sequence spans 1345 residues: DNA-directed RNA polymerase subunit beta (1345 aa).

This sequence belongs to the RNA polymerase beta chain family. As to quaternary structure, the RNAP catalytic core consists of 2 alpha, 1 beta, 1 beta' and 1 omega subunit. When a sigma factor is associated with the core the holoenzyme is formed, which can initiate transcription.

It catalyses the reaction RNA(n) + a ribonucleoside 5'-triphosphate = RNA(n+1) + diphosphate. Functionally, DNA-dependent RNA polymerase catalyzes the transcription of DNA into RNA using the four ribonucleoside triphosphates as substrates. This is DNA-directed RNA polymerase subunit beta from Shewanella oneidensis (strain ATCC 700550 / JCM 31522 / CIP 106686 / LMG 19005 / NCIMB 14063 / MR-1).